A 71-amino-acid chain; its full sequence is Large ribosomal subunit protein bL31 (71 aa).

Positions 16, 18, 37, and 40 each coordinate Zn(2+).

The protein belongs to the bacterial ribosomal protein bL31 family. Type A subfamily. As to quaternary structure, part of the 50S ribosomal subunit. The cofactor is Zn(2+).

Its function is as follows. Binds the 23S rRNA. The protein is Large ribosomal subunit protein bL31 of Chromohalobacter salexigens (strain ATCC BAA-138 / DSM 3043 / CIP 106854 / NCIMB 13768 / 1H11).